We begin with the raw amino-acid sequence, 468 residues long: Heat stress transcription factor A-1e (468 aa).

Residues 21–115 (IPPFLSKTYD…ILKSIVRRKP (95 aa)) mediate DNA binding. The hydrophobic repeat HR-A/B stretch occupies residues 133 to 199 (ACVEVGKFGL…QMMSFLAKAV (67 aa)). Over residues 211–220 (QSNEANQHIS) the composition is skewed to polar residues. Disordered regions lie at residues 211 to 244 (QSNEANQHISESNKKRRLPVEDQMNSGSHGVNGL) and 268 to 309 (QMSN…PEVT). The Nuclear localization signal motif lies at 223–227 (NKKRR). The span at 277-305 (SLSSNNGSFLLGDVPNSNISDNGSSSNGS) shows a compositional bias: low complexity. Positions 402–411 (DSFWEQFIGE) match the AHA motif. The Nuclear export signal signature appears at 454 to 461 (LTEQMGLL).

This sequence belongs to the HSF family. Class A subfamily. In terms of assembly, homotrimer. In terms of processing, exhibits temperature-dependent phosphorylation.

The protein localises to the cytoplasm. It is found in the nucleus. Its function is as follows. Transcriptional activator that specifically binds DNA sequence 5'-AGAAnnTTCT-3' known as heat shock promoter elements (HSE). The protein is Heat stress transcription factor A-1e (HSFA1E) of Arabidopsis thaliana (Mouse-ear cress).